The chain runs to 370 residues: Cytochrome b (370 aa).

The next 4 helical transmembrane spans lie at 30-50 (FGSMLGMVLVFQIVTGTFLAF), 74-96 (WIFRIFHFNGASLFFIFLYLHIF), 109-129 (VWMSGLTIYLLVMMEAFMGYV), and 175-195 (FFVLHFLLPWAILFIVLGHLI). Heme b is bound by residues H80 and H94. Heme b is bound by residues H179 and H193. Position 198 (H198) interacts with a ubiquinone. Transmembrane regions (helical) follow at residues 221–240 (YIGKDAYNIVVWLVFIVLSL), 284–304 (VLGVIALLMSIVTFYFFALVN), 316–336 (FLVFLFIISSVILSWLGQCMV), and 342–362 (VLSPLFSVIYFGLAYLLLGIF).

It belongs to the cytochrome b family. As to quaternary structure, the main subunits of complex b-c1 are: cytochrome b, cytochrome c1 and the Rieske protein. The cofactor is heme b.

It is found in the mitochondrion inner membrane. Its function is as follows. Component of the ubiquinol-cytochrome c reductase complex (complex III or cytochrome b-c1 complex) that is part of the mitochondrial respiratory chain. The b-c1 complex mediates electron transfer from ubiquinol to cytochrome c. Contributes to the generation of a proton gradient across the mitochondrial membrane that is then used for ATP synthesis. The sequence is that of Cytochrome b (ctb-1) from Caenorhabditis briggsae.